The following is a 96-amino-acid chain: Protein RnfH (96 aa).

The protein belongs to the UPF0125 (RnfH) family.

This chain is Protein RnfH, found in Klebsiella pneumoniae (strain 342).